We begin with the raw amino-acid sequence, 374 residues long: Trichodiene synthase (374 aa).

Asp100, Glu164, Asn225, Ser229, Glu233, Asp239, and Ile241 together coordinate Mg(2+). Residues 100-104 (DDSKD) are aspartate-rich domain.

It belongs to the trichodiene synthase family. Mg(2+) is required as a cofactor. The cofactor is Mn(2+).

The enzyme catalyses (2E,6E)-farnesyl diphosphate = trichodiene + diphosphate. It functions in the pathway sesquiterpene biosynthesis; trichothecene biosynthesis. Its activity is regulated as follows. Benzyl triethylammonium cation (BTAC) acts as a competitive inhibitor of trichodiene synthase reaction in the presence of pyrophosphate (PPi). Trichodiene synthase; part of the core gene cluster that mediates the biosynthesis of trichothecenes, a very large family of chemically related bicyclic sesquiterpene compounds acting as mycotoxins, including T2-toxin. The biosynthesis of trichothecenes begins with the cyclization of farnesyl diphosphate to trichodiene and is catalyzed by the trichodiene synthase TRI5. Trichodiene undergoes a series of oxygenations catalyzed by the cytochrome P450 monooxygenase TRI4. TRI4 controls the addition of four oxygens at C-2, C-3, C-11, and the C-12, C-13-epoxide to form the intermediate isotrichotriol. Isotrichotriol then undergoes a non-enzymatic isomerization and cyclization to form isotrichodermol. During this process, the oxygen at the C-2 position becomes the pyran ring oxygen and the hydroxyl group at C-11 is lost. More complex type A trichothecenes are built by modifying isotrichodermol through a series of paired hydroxylation and acetylation or acylation steps. Isotrichodermol is converted to isotrichodermin by the acetyltransferase TRI101. TRI101 encodes a C-3 transacetylase that acts as a self-protection or resistance factor during biosynthesis and that the presence of a free C-3 hydroxyl group is a key component of Fusarium trichothecene phytotoxicity. A second hydroxyl group is added to C-15 by the trichothecene C-15 hydroxylase TRI11, producing 15-decalonectrin, which is then acetylated by TRI3, producing calonectrin. A third hydroxyl group is added at C-4 by the cytochrome P450 monooxygenase TRI13, converting calonectrin to 3,15-diacetoxyspirpenol, which is subsequently acetylated by the acetyltransferase TRI7. A fourth hydroxyl group is added to C-8 by the cytochrome P450 monooxygenase TRI1, followed by the addition of an isovaleryl moiety by TRI16. Finally, the acetyl group is removed from the C-3 position by the trichothecene C-3 esterase TRI8 to produce T-2 toxin. This chain is Trichodiene synthase, found in Fusarium sporotrichioides.